Here is a 750-residue protein sequence, read N- to C-terminus: MIIRSPEPEVKILVDRDPIKTSFEEWAKPGHFSRTIAKGPETTTWIWNLHADAHDFDSHTSDLEEISRKVFSAHFGQLSIIFLWLSGMYFHGARFSNYEAWLSDPTHIGPSAQVVWPIVGQEILNGDVGGGFRGIQITSGFFQLWRASGITSELQLYCTAIGALVFAALMLFAGWFHYHKAAPKLAWFQDVESMLNHHLAGLLGLGSLSWAGHQVHVSLPINQFLNAGVDPKEIPLPHEFILNRDLLAQLYPSFAEGATPFFTLNWSKYAEFLTFRGGLDPVTGGLWLTDIAHHHLAIAILFLIAGHMYRTNWGIGHGLKDILEAHKGPFTGQGHKGLYEILTTSWHAQLSLNLAMLGSLTIVVAHHMYSMPPYPYLATDYGTQLSLFTHHMWIGGFLIVGAAAHAAIFMVRDYDPTTRYNDLLDRVLRHRDAIISHLNWVCIFLGFHSFGLYIHNDTMSALGRPQDMFSDTAIQLQPVFAQWIQNTHALAPGATAPGATTSTSLAWGGGDLVAVGGKVALLPIPLGTADFLVHHIHAFTIHVTVLILLKGVLFARSSRLIPDKANLGFRFPCDGPGRGGTCQVSAWDHVFLGLFWMYNAISVVIFHFSWKMQSDVWGSISDQGVVTHITGGNFAQSSITINGWLRDFLWAQASQVIQSYGSSLSAYGLFFLGAHFVWAFSLMFLFSGRGYWQELIESIVWAHNKLKVAPATQPRALSIVQGRTVGVTHYLLGGIATTWAFFLARIIAVG.

8 helical membrane-spanning segments follow: residues 70–93 (VFSAHFGQLSIIFLWLSGMYFHGA), 156–179 (LYCTAIGALVFAALMLFAGWFHYH), 195–219 (LNHHLAGLLGLGSLSWAGHQVHVSL), 291–309 (IAHHHLAIAILFLIAGHMY), 346–369 (WHAQLSLNLAMLGSLTIVVAHHMY), 385–411 (LSLFTHHMWIGGFLIVGAAAHAAIFMV), 433–455 (AIISHLNWVCIFLGFHSFGLYIH), and 531–549 (FLVHHIHAFTIHVTVLILL). The [4Fe-4S] cluster site is built by cysteine 573 and cysteine 582. 2 helical membrane passes run 589–610 (HVFLGLFWMYNAISVVIFHFSW) and 664–686 (LSAYGLFFLGAHFVWAFSLMFLF). Residue histidine 675 participates in chlorophyll a' binding. Chlorophyll a is bound by residues methionine 683 and tyrosine 691. Residue tryptophan 692 coordinates phylloquinone. Residues 724 to 744 (TVGVTHYLLGGIATTWAFFLA) form a helical membrane-spanning segment.

Belongs to the PsaA/PsaB family. The PsaA/B heterodimer binds the P700 chlorophyll special pair and subsequent electron acceptors. PSI consists of a core antenna complex that captures photons, and an electron transfer chain that converts photonic excitation into a charge separation. The eukaryotic PSI reaction center is composed of at least 11 subunits. P700 is a chlorophyll a/chlorophyll a' dimer, A0 is one or more chlorophyll a, A1 is one or both phylloquinones and FX is a shared 4Fe-4S iron-sulfur center. is required as a cofactor.

Its subcellular location is the plastid. The protein localises to the chloroplast thylakoid membrane. It catalyses the reaction reduced [plastocyanin] + hnu + oxidized [2Fe-2S]-[ferredoxin] = oxidized [plastocyanin] + reduced [2Fe-2S]-[ferredoxin]. In terms of biological role, psaA and PsaB bind P700, the primary electron donor of photosystem I (PSI), as well as the electron acceptors A0, A1 and FX. PSI is a plastocyanin-ferredoxin oxidoreductase, converting photonic excitation into a charge separation, which transfers an electron from the donor P700 chlorophyll pair to the spectroscopically characterized acceptors A0, A1, FX, FA and FB in turn. Oxidized P700 is reduced on the lumenal side of the thylakoid membrane by plastocyanin. The polypeptide is Photosystem I P700 chlorophyll a apoprotein A1 (Oenothera elata subsp. hookeri (Hooker's evening primrose)).